The sequence spans 132 residues: uncharacterized protein (132 aa).

Residues 1–34 are disordered; sequence MTAGAGGSPPTRRCPATEDRAPATVATPSSADPT.

To M.tuberculosis Rv2656c.

This is an uncharacterized protein from Mycobacterium tuberculosis (strain CDC 1551 / Oshkosh).